A 596-amino-acid chain; its full sequence is MHRYRSHTCAALRKSDVGSTVRISGWVHRVRDHGGVLFIDLRDHYGITQVVADPDSPAFQMAETVRGEWVIRIDGLVKARTEDTVNKTMATGEIELYAQEIEVLSAAKELPLPVFGEPDYPEDVRLKYRFLDLRRETLHRNIVKRTQVISAMRREMGNVGFTEYTTPILTASSPEGARDFLVPSRIHPGTFYALPQAPQQYKQLLMVAGFDRYFQIAPCFRDEDPRADRLPGEFYQLDLEMSFVTQEDVWNTMGPLMTSIFEEFAEGKPVTKEWPRIPYDEAIRKYGSDKPDLRNPIVMQAVTEHFAGSGFKVFAGMIASNPKVEIWAIPAKTGGSRAFCDRMNAWAQSTGQPGLGYIFWRKEGDKLEGAGPLAKNIGEERTDAIRTQLGLDDGDACFFVAGDPAKFYKFAGEARTKAGEELNLVDRDRFELCWIVDFPFFEWSEEDKKVDFAHNPFSMPQGGLDALQNQDPLTIKAFQYDAVCNGFEIASGSIRNQSPETMVAAFEKVGLSQQDVEDRFGGLYRAFQYGAPPHGGAAFGIDRIVMLLVGAKNLREISLFPMNQQAQDLLMGAPSPAAPTQLRELSIRPIPPVKKD.

Residue Glu175 participates in L-aspartate binding. Positions 199-202 (QQYK) are aspartate. Residues Arg221 and His454 each coordinate L-aspartate. 221–223 (RDE) is a binding site for ATP. Glu488 is a binding site for ATP. Arg495 is a binding site for L-aspartate. Residue 540 to 543 (GIDR) coordinates ATP.

Belongs to the class-II aminoacyl-tRNA synthetase family. Type 1 subfamily. In terms of assembly, homodimer.

Its subcellular location is the cytoplasm. It catalyses the reaction tRNA(Asx) + L-aspartate + ATP = L-aspartyl-tRNA(Asx) + AMP + diphosphate. Functionally, aspartyl-tRNA synthetase with relaxed tRNA specificity since it is able to aspartylate not only its cognate tRNA(Asp) but also tRNA(Asn). Reaction proceeds in two steps: L-aspartate is first activated by ATP to form Asp-AMP and then transferred to the acceptor end of tRNA(Asp/Asn). This Rhizobium johnstonii (strain DSM 114642 / LMG 32736 / 3841) (Rhizobium leguminosarum bv. viciae) protein is Aspartate--tRNA(Asp/Asn) ligase.